We begin with the raw amino-acid sequence, 234 residues long: 2-C-methyl-D-erythritol 4-phosphate cytidylyltransferase (234 aa).

It belongs to the IspD/TarI cytidylyltransferase family. IspD subfamily.

The catalysed reaction is 2-C-methyl-D-erythritol 4-phosphate + CTP + H(+) = 4-CDP-2-C-methyl-D-erythritol + diphosphate. The protein operates within isoprenoid biosynthesis; isopentenyl diphosphate biosynthesis via DXP pathway; isopentenyl diphosphate from 1-deoxy-D-xylulose 5-phosphate: step 2/6. In terms of biological role, catalyzes the formation of 4-diphosphocytidyl-2-C-methyl-D-erythritol from CTP and 2-C-methyl-D-erythritol 4-phosphate (MEP). The polypeptide is 2-C-methyl-D-erythritol 4-phosphate cytidylyltransferase (Thermosynechococcus vestitus (strain NIES-2133 / IAM M-273 / BP-1)).